We begin with the raw amino-acid sequence, 177 residues long: Cytochrome c oxidase assembly protein CtaG (177 aa).

Residues 1 to 8 are Cytoplasmic-facing; that stretch reads MTQKAKNT. A helical; Signal-anchor for type II membrane protein transmembrane segment spans residues 9 to 29; it reads IYLLILIILSMLCLVYASVPL. The Periplasmic portion of the chain corresponds to 30–177; sequence YSIFCKVTGY…TFFKYKETTK (148 aa).

The protein belongs to the COX11/CtaG family.

Its subcellular location is the cell inner membrane. Functionally, exerts its effect at some terminal stage of cytochrome c oxidase synthesis, probably by being involved in the insertion of the copper B into subunit I. The polypeptide is Cytochrome c oxidase assembly protein CtaG (Ehrlichia ruminantium (strain Gardel)).